The primary structure comprises 342 residues: Galactose mutarotase (342 aa).

Serine 14 bears the Phosphoserine mark. Beta-D-galactose contacts are provided by residues 81 to 82 and histidine 107; that span reads NR. Residue serine 124 is modified to Phosphoserine. Histidine 176 acts as the Proton donor in catalysis. Beta-D-galactose-binding positions include 176–178, aspartate 243, glutamine 279, and glutamate 307; that span reads HSY. Glutamate 307 acts as the Proton acceptor in catalysis.

This sequence belongs to the aldose epimerase family. Monomer.

It is found in the cytoplasm. It catalyses the reaction alpha-D-galactose = beta-D-galactose. The catalysed reaction is alpha-D-glucose = beta-D-glucose. Its pathway is carbohydrate metabolism; hexose metabolism. It functions in the pathway carbohydrate metabolism; galactose metabolism. In terms of biological role, mutarotase that catalyzes the interconversion of beta-D-galactose and alpha-D-galactose during galactose metabolism. Beta-D-galactose is metabolized in the liver into glucose 1-phosphate, the primary metabolic fuel, by the action of four enzymes that constitute the Leloir pathway: GALM, GALK1 (galactokinase), GALT (galactose-1-phosphate uridylyltransferase) and GALE (UDP-galactose-4'-epimerase). Involved in the maintenance of the equilibrium between the beta- and alpha-anomers of galactose, therefore ensuring a sufficient supply of the alpha-anomer for GALK1. Also active on D-glucose although shows a preference for galactose over glucose. The chain is Galactose mutarotase (GALM) from Sus scrofa (Pig).